Consider the following 218-residue polypeptide: Fibroblast growth factor 15 (218 aa).

Positions 1-25 are cleaved as a signal peptide; sequence MARKWNGRAVARALVLATLWLAVSG.

This sequence belongs to the heparin-binding growth factors family. Interacts with MALRD1. As to expression, expressed in the developing brain.

It localises to the secreted. Functionally, involved in the suppression of bile acid biosynthesis through down-regulation of CYP7A1 expression. The polypeptide is Fibroblast growth factor 15 (Fgf15) (Mus musculus (Mouse)).